A 707-amino-acid chain; its full sequence is Golgin candidate 1 (707 aa).

At 1-664 (MASWLKAAED…RATRFLWRYP (664 aa)) the chain is on the cytoplasmic side. 3 disordered regions span residues 22–106 (VVED…EIHP), 121–196 (VADT…SKRD), and 234–256 (QEPK…ADTT). The span at 38–47 (SGRKGSQGKR) shows a compositional bias: low complexity. Basic and acidic residues predominate over residues 56 to 67 (VKEESSNKRDSS). Over residues 68–80 (GDQSGPGVSQSEV) the composition is skewed to polar residues. Low complexity predominate over residues 83-95 (SKSSVSTDETSSS). 3 stretches are compositionally biased toward basic and acidic residues: residues 139-150 (DGDRSESKHADG), 185-196 (TQRELDDSSKRD), and 245-254 (LKREQDRRAD). Coiled-coil stretches lie at residues 287–424 (RVCA…NATK) and 452–608 (ADER…KSRV). Residues 665-685 (IARMFLLFYLVFVHLFLMYLI) traverse the membrane as a helical; Signal-anchor for type II membrane protein segment. Residues 686–707 (HRLQEQAEAQEVAAMTNNVFRL) lie on the Lumenal side of the membrane.

It localises to the golgi apparatus membrane. Its function is as follows. Golgi matrix protein playing a role in tethering of vesicles to Golgi membranes and in maintaining the overall structure of the Golgi apparatus. This is Golgin candidate 1 (GC1) from Arabidopsis thaliana (Mouse-ear cress).